The sequence spans 503 residues: Cysteine--tRNA ligase (503 aa).

Cys31 is a binding site for Zn(2+). A 'HIGH' region motif is present at residues 33–43 (PTVYDYAHIGN). Zn(2+)-binding residues include Cys225, His264, and Glu268. A 'KMSKS' region motif is present at residues 297–301 (KMSKS). Lys300 contributes to the ATP binding site.

This sequence belongs to the class-I aminoacyl-tRNA synthetase family. As to quaternary structure, monomer. Requires Zn(2+) as cofactor.

Its subcellular location is the cytoplasm. It catalyses the reaction tRNA(Cys) + L-cysteine + ATP = L-cysteinyl-tRNA(Cys) + AMP + diphosphate. The sequence is that of Cysteine--tRNA ligase from Bartonella tribocorum (strain CIP 105476 / IBS 506).